Here is a 503-residue protein sequence, read N- to C-terminus: Probable cytosol aminopeptidase (503 aa).

The Mn(2+) site is built by Lys-274 and Asp-279. Lys-286 is a catalytic residue. Mn(2+) contacts are provided by Asp-297, Asp-356, and Glu-358. Arg-360 is an active-site residue.

Belongs to the peptidase M17 family. Mn(2+) is required as a cofactor.

It localises to the cytoplasm. The catalysed reaction is Release of an N-terminal amino acid, Xaa-|-Yaa-, in which Xaa is preferably Leu, but may be other amino acids including Pro although not Arg or Lys, and Yaa may be Pro. Amino acid amides and methyl esters are also readily hydrolyzed, but rates on arylamides are exceedingly low.. It carries out the reaction Release of an N-terminal amino acid, preferentially leucine, but not glutamic or aspartic acids.. Its function is as follows. Presumably involved in the processing and regular turnover of intracellular proteins. Catalyzes the removal of unsubstituted N-terminal amino acids from various peptides. The polypeptide is Probable cytosol aminopeptidase (Burkholderia lata (strain ATCC 17760 / DSM 23089 / LMG 22485 / NCIMB 9086 / R18194 / 383)).